The primary structure comprises 146 residues: Hemoglobin subunit beta-2 (146 aa).

Positions 2-146 (GLTAHEKQLI…IADALGKGYH (145 aa)) constitute a Globin domain. The heme b site is built by His-63 and His-92.

This sequence belongs to the globin family. In terms of assembly, heterotetramer of two alpha chains and two beta chains. Red blood cells.

Functionally, involved in oxygen transport from the lung to the various peripheral tissues. The protein is Hemoglobin subunit beta-2 (hbb2) of Xenopus borealis (Kenyan clawed frog).